A 404-amino-acid polypeptide reads, in one-letter code: RNA exonuclease 3 (404 aa).

The region spanning 243–389 (VLSLDCEMAF…QDAIATMDVV (147 aa)) is the Exonuclease domain.

This sequence belongs to the REXO1/REXO3 family.

The protein localises to the cytoplasm. The protein resides in the nucleus. Its function is as follows. 3' to 5' exoribonuclease required for proper 3' end maturation of MRP RNA and of the U5L snRNA. In Saccharomyces cerevisiae (strain ATCC 204508 / S288c) (Baker's yeast), this protein is RNA exonuclease 3 (REX3).